We begin with the raw amino-acid sequence, 265 residues long: U6 snRNA phosphodiesterase 1 (265 aa).

The interval 1 to 22 is disordered; that stretch reads MSLVCYESSSSGEDDDETISDN. The active-site Proton acceptor is H109. AMP-binding positions include 109-111 and 195-201; these read HLS and DFLLHIS. Residue 197-201 coordinates UMP; sequence LLHIS. The active-site Proton donor is H199.

Belongs to the 2H phosphoesterase superfamily. USB1 family.

The protein resides in the nucleus. The catalysed reaction is a 3'-end uridylyl-uridine-RNA = a 3'-end 2',3'-cyclophospho-uridine-RNA + uridine. Its function is as follows. 3'-5' RNA exonuclease that trims the 3' end of oligo(U) tracts of the pre-U6 small nuclear RNA (snRNA) molecule, leading to the formation of a U6 snRNA 3' end-terminated with a 2',3'-cyclic phosphate.d. Participates in the U6 snRNA 3' end processing that prevents U6 snRNA degradation. This is U6 snRNA phosphodiesterase 1 from Schizosaccharomyces pombe (strain 972 / ATCC 24843) (Fission yeast).